Reading from the N-terminus, the 581-residue chain is Pyridine nucleotide-disulfide oxidoreductase domain-containing protein 2 (581 aa).

38 to 71 contributes to the FAD binding site; sequence VVIGAGHNGLVAAAYLQRLGVNTAVFERRHVIGG.

The protein belongs to the carotenoid/retinoid oxidoreductase family. In terms of assembly, interacts with COX5B; this interaction may contribute to localize PYROXD2 to the inner face of the inner mitochondrial membrane.

It localises to the mitochondrion matrix. In terms of biological role, probable oxidoreductase that may play a role as regulator of mitochondrial function. The chain is Pyridine nucleotide-disulfide oxidoreductase domain-containing protein 2 from Homo sapiens (Human).